The sequence spans 181 residues: Adenylyl-sulfate kinase (181 aa).

12-19 (GLSGAGKT) provides a ligand contact to ATP. Serine 86 acts as the Phosphoserine intermediate in catalysis.

The protein belongs to the APS kinase family.

It carries out the reaction adenosine 5'-phosphosulfate + ATP = 3'-phosphoadenylyl sulfate + ADP + H(+). Its pathway is sulfur metabolism; hydrogen sulfide biosynthesis; sulfite from sulfate: step 2/3. Functionally, catalyzes the synthesis of activated sulfate. The chain is Adenylyl-sulfate kinase from Rippkaea orientalis (strain PCC 8801 / RF-1) (Cyanothece sp. (strain PCC 8801)).